A 379-amino-acid chain; its full sequence is Acyl-CoA dehydrogenase, short-chain specific (379 aa).

This sequence belongs to the acyl-CoA dehydrogenase family. FAD is required as a cofactor.

The catalysed reaction is butanoyl-CoA + oxidized [electron-transfer flavoprotein] + H(+) = (2E)-butenoyl-CoA + reduced [electron-transfer flavoprotein]. The enzyme catalyses a short-chain 2,3-saturated fatty acyl-CoA + oxidized [electron-transfer flavoprotein] + H(+) = a short-chain (2E)-enoyl-CoA + reduced [electron-transfer flavoprotein]. It functions in the pathway lipid metabolism; butanoate metabolism. This is Acyl-CoA dehydrogenase, short-chain specific (bcd) from Clostridium acetobutylicum (strain ATCC 824 / DSM 792 / JCM 1419 / IAM 19013 / LMG 5710 / NBRC 13948 / NRRL B-527 / VKM B-1787 / 2291 / W).